Reading from the N-terminus, the 349-residue chain is Terpene cyclase janA (349 aa).

Asn-80 carries an N-linked (GlcNAc...) asparagine glycan. 6 helical membrane passes run 81-101 (LSLY…VIVL), 116-136 (LAFL…IPAI), 155-175 (IGFY…LAAL), 189-209 (LIAV…IIHY), 223-243 (IACA…LWFA), and 308-328 (VILI…VALL).

It belongs to the membrane-bound ascI terpene cyclase family.

It is found in the membrane. It functions in the pathway secondary metabolite biosynthesis. In terms of biological role, part of the gene cluster that mediates the biosynthesis of the indole diterpenes janthitremanes such as shearinine K or shearinine A. The geranylgeranyl diphosphate (GGPP) synthase janG catalyzes the first step in janthitremane biosynthesis via conversion of farnesyl pyrophosphate and isopentyl pyrophosphate into geranylgeranyl pyrophosphate (GGPP). Condensation of indole-3-glycerol phosphate with GGPP by the prenyl transferase janC then forms 3-geranylgeranylindole (3-GGI). Epoxidation by the FAD-dependent monooxygenase janM leads to a epoxidized-GGI that is substrate of the terpene cyclase janB for cyclization to yield paspaline. Paspaline is subsequently converted to 13-desoxypaspaline by the cytochrome P450 monooxygenase janP, via beta-PC-M6 in a series of alpha-face oxidations. The cytochrome P450 monooxygenase janQ is proposed to carry out sequential beta-face oxidation steps at C-7 and C-13 of 13-desoxypaspaline to form paspalicine and paspalinine respectively. The indole diterpene prenyltransferase janD may then convert paspalinine into shearinine K which is substrate of janO and/or additional enzymes for oxidation and cyclization to generate shearinine A. In Penicillium janthinellum (Penicillium vitale), this protein is Terpene cyclase janA.